The chain runs to 319 residues: D-galacturonate reductase (319 aa).

The active-site Proton donor is the tyrosine 58. Histidine 121 is a substrate binding site. Residue 216–275 (SPLGAARTKWGDDRVLGSDIIEEIAQAKGKSTAQISLRWVYEQGVSIVTKSYNKERMRQN) participates in NADP(+) binding.

The protein belongs to the aldo/keto reductase family. In terms of tissue distribution, expressed specifically in the receptacle tissue of the fruit.

The catalysed reaction is L-galactonate + NADP(+) = aldehydo-D-galacturonate + NADPH + H(+). It functions in the pathway cofactor biosynthesis; L-ascorbate biosynthesis. Functionally, involved in ascorbic acid (vitamin C) biosynthesis. The sequence is that of D-galacturonate reductase (GALUR) from Fragaria ananassa (Strawberry).